The primary structure comprises 316 residues: MYPAITPLQAGLQWWAVAGRQGVAELWQVQVETAADGADGEVEETLYWYLSELGLPHVERQILAGRLVLRGYLSGETPEGVMERWREHIRERLTQKAEIGWYAVERRDWQAAWREQWRPIFVGERLVIWPVWLPDPPGDRLVIPLDPGMAFGTGEHATTRLCLRALESVPDLGTFADVGCGSGVLTVAALKLGAGRGWAVDTDDLAVVSTRKNLEISGLEERVTVARGSTEQLSGPLDGVVSNILAEVIANLAPEFRRLVHPGGWGIFSGLLLTQAPRVVEALAGQGFALSETLSEGDWACLVGRFSADRPRSAGS.

The S-adenosyl-L-methionine site is built by T159, G179, D201, and N243.

Belongs to the methyltransferase superfamily. PrmA family.

It is found in the cytoplasm. It catalyses the reaction L-lysyl-[protein] + 3 S-adenosyl-L-methionine = N(6),N(6),N(6)-trimethyl-L-lysyl-[protein] + 3 S-adenosyl-L-homocysteine + 3 H(+). Its function is as follows. Methylates ribosomal protein L11. This is Ribosomal protein L11 methyltransferase from Gloeobacter violaceus (strain ATCC 29082 / PCC 7421).